Consider the following 514-residue polypeptide: Xylose import ATP-binding protein XylG (514 aa).

2 ABC transporter domains span residues 7 to 246 (FEMR…VGRE) and 263 to 508 (LEAR…IHAE). Residue 39-46 (GENGAGKS) coordinates ATP.

The protein belongs to the ABC transporter superfamily. Xylose importer (TC 3.A.1.2.4) family. As to quaternary structure, the complex is composed of two ATP-binding proteins (XylG), two transmembrane proteins (XylH) and a solute-binding protein (XylF).

The protein localises to the cell inner membrane. The catalysed reaction is D-xylose(out) + ATP + H2O = D-xylose(in) + ADP + phosphate + H(+). Part of the ABC transporter complex XylFGH involved in xylose import. Responsible for energy coupling to the transport system. This is Xylose import ATP-binding protein XylG from Ralstonia nicotianae (strain ATCC BAA-1114 / GMI1000) (Ralstonia solanacearum).